We begin with the raw amino-acid sequence, 146 residues long: Probable calcium-binding protein CML40 (146 aa).

The EF-hand 1 domain maps to 7-42; that stretch reads NKRDEYQRVFSCFDKSHQGKVSVSTIERCVDAIKSG. The segment at 44-65 is disordered; the sequence is RAVVDQEDTTNPNPEESTDDKS. The region spanning 116–146 is the EF-hand 2 domain; the sequence is KSLKDCEVMISQFDINRDGIINFDEFRAMMQ. The Ca(2+) site is built by Asp-129, Asn-131, Asp-133, and Glu-140.

Functionally, potential calcium sensor. The chain is Probable calcium-binding protein CML40 (CML40) from Arabidopsis thaliana (Mouse-ear cress).